The sequence spans 239 residues: Phosducin-like protein 2 (239 aa).

Residues 26–87 adopt a coiled-coil conformation; sequence TEDELFDLIK…IQQMKVEAEL (62 aa). One can recognise a Phosducin domain in the interval 36-196; sequence EAAEMATEAE…TTVNDIEWQL (161 aa). Basic and acidic residues predominate over residues 42 to 59; the sequence is TEAEKNEKLENASLKDLK. Disordered regions lie at residues 42–64 and 212–239; these read TEAE…MEDD and ITLA…DSDD. Residues 90–239 are thioredoxin fold; that stretch reads FGELKEISEP…DESDNSDSDD (150 aa). Residues 214–224 show a composition bias toward basic residues; that stretch reads LARKKSQKSRY. Residues 230–239 are compositionally biased toward acidic residues; it reads DESDNSDSDD.

Belongs to the phosducin family.

The polypeptide is Phosducin-like protein 2 (phlp2) (Dictyostelium discoideum (Social amoeba)).